The following is a 465-amino-acid chain: Na(+)-translocating NADH-quinone reductase subunit A (465 aa).

The protein belongs to the NqrA family. As to quaternary structure, composed of six subunits; NqrA, NqrB, NqrC, NqrD, NqrE and NqrF.

It carries out the reaction a ubiquinone + n Na(+)(in) + NADH + H(+) = a ubiquinol + n Na(+)(out) + NAD(+). NQR complex catalyzes the reduction of ubiquinone-1 to ubiquinol by two successive reactions, coupled with the transport of Na(+) ions from the cytoplasm to the periplasm. NqrA to NqrE are probably involved in the second step, the conversion of ubisemiquinone to ubiquinol. The protein is Na(+)-translocating NADH-quinone reductase subunit A of Chlamydia muridarum (strain MoPn / Nigg).